Consider the following 316-residue polypeptide: Bifunctional riboflavin kinase/FMN adenylyltransferase (316 aa).

Belongs to the RibF family.

It catalyses the reaction riboflavin + ATP = FMN + ADP + H(+). The enzyme catalyses FMN + ATP + H(+) = FAD + diphosphate. The protein operates within cofactor biosynthesis; FAD biosynthesis; FAD from FMN: step 1/1. It participates in cofactor biosynthesis; FMN biosynthesis; FMN from riboflavin (ATP route): step 1/1. In terms of biological role, catalyzes the phosphorylation of riboflavin to FMN followed by the adenylation of FMN to FAD. The polypeptide is Bifunctional riboflavin kinase/FMN adenylyltransferase (ribC) (Bacillus subtilis (strain 168)).